The following is a 394-amino-acid chain: RILP-like protein 1 (394 aa).

The RH1 domain occupies 2 to 89 (EGISALEKNV…RLERMDRIEK (88 aa)). A coiled-coil region spans residues 68–312 (EMEELRLELD…KVFMLQEELA (245 aa)). One can recognise an RH2 domain in the interval 282–347 (RPRFTLQELR…IPQESGIKRL (66 aa)). The segment at 318–337 (EADEEHKLPQSSPVIDSKAP) is disordered.

It belongs to the RILPL family.

The protein resides in the cytoplasm. It localises to the cytosol. The protein localises to the cytoskeleton. Its subcellular location is the microtubule organizing center. It is found in the centrosome. The protein resides in the cell projection. It localises to the cilium. Plays a role in the regulation of cell shape and polarity. Plays a role in cellular protein transport, including protein transport away from primary cilia. Neuroprotective protein. The protein is RILP-like protein 1 (rilpl1) of Xenopus tropicalis (Western clawed frog).